The following is a 684-amino-acid chain: Pseudohemocyanin-1 (684 aa).

An N-terminal signal peptide occupies residues S1 to R23. A disordered region spans residues A7–A32. N100, N193, N230, and N626 each carry an N-linked (GlcNAc...) asparagine glycan.

The protein belongs to the tyrosinase family. Hemocyanin subfamily. In terms of assembly, hexamer. In terms of tissue distribution, strongly expressed in ovaries. Also expressed in heart. Not detected in hepatopancreas, gills, connective tissue or muscle.

In terms of biological role, does not function as a hemocyanin. The chain is Pseudohemocyanin-1 from Homarus americanus (American lobster).